The primary structure comprises 2164 residues: Hemagglutinin A (2164 aa).

The first 25 residues, 1 to 25, serve as a signal peptide directing secretion; the sequence is MRKLNSLFSLAVLLSLLCWGQTAAA. Peptidase C25-like regions lie at residues 26 to 539, 540 to 991, and 992 to 1443; these read QGGP…TPPP, GGSS…TPPP, and GGTS…TPPP. Disordered regions lie at residues 493-512 and 520-541; these read WDAPNGTPNPNPGTTTLSES and SWKTIDADGDGNNWTTTPPPGG. Residues 496–508 show a composition bias toward low complexity; that stretch reads PNGTPNPNPGTTT.

Belongs to the peptidase C25 family.

In terms of biological role, agglutinates erythrocytes. The sequence is that of Hemagglutinin A (hagA) from Porphyromonas gingivalis (strain ATCC BAA-308 / W83).